The chain runs to 123 residues: Small ribosomal subunit protein uS12 (123 aa).

The tract at residues 11 to 32 (PRQEKTYREKARHLGASPQKRG) is disordered. Asp-89 carries the 3-methylthioaspartic acid modification.

This sequence belongs to the universal ribosomal protein uS12 family. Part of the 30S ribosomal subunit. Contacts proteins S8 and S17. May interact with IF1 in the 30S initiation complex.

Functionally, with S4 and S5 plays an important role in translational accuracy. Interacts with and stabilizes bases of the 16S rRNA that are involved in tRNA selection in the A site and with the mRNA backbone. Located at the interface of the 30S and 50S subunits, it traverses the body of the 30S subunit contacting proteins on the other side and probably holding the rRNA structure together. The combined cluster of proteins S8, S12 and S17 appears to hold together the shoulder and platform of the 30S subunit. This Methylocella silvestris (strain DSM 15510 / CIP 108128 / LMG 27833 / NCIMB 13906 / BL2) protein is Small ribosomal subunit protein uS12.